The sequence spans 471 residues: Ubiquitin-conjugating enzyme E2 variant 3 (471 aa).

Positions 2–145 (DVNSEPVKKV…EEEPPLGTKS (144 aa)) constitute a UEV domain. An NAD(+)-binding site is contributed by 183–211 (GDLGIAAVLSIMAKSCVDKLVLIDIPENS).

The protein in the N-terminal section; belongs to the ubiquitin-conjugating enzyme family. UEV subfamily. In the C-terminal section; belongs to the LDH/MDH superfamily. Homodimer.

In terms of biological role, possible negative regulator of polyubiquitination. This is Ubiquitin-conjugating enzyme E2 variant 3 (uevld) from Danio rerio (Zebrafish).